The sequence spans 493 residues: Alpha-amylase-related protein (493 aa).

A signal peptide spans 1–19; sequence MFKFALTQTLCLAGSLSLA. Q20 carries the pyrrolidone carboxylic acid modification. Residues C47 and C103 are joined by a disulfide bond. Ca(2+) is bound by residues N117, Q168, and D177. A disulfide bridge connects residues C156 and C170. R205 lines the chloride pocket. Catalysis depends on D207, which acts as the Nucleophile. H211 provides a ligand contact to Ca(2+). E244 serves as the catalytic Proton donor. 2 residues coordinate chloride: N307 and R342. Disulfide bonds link C375/C381, C417/C440, and C447/C459.

The protein belongs to the glycosyl hydrolase 13 family. In terms of assembly, monomer. Ca(2+) serves as cofactor. Requires chloride as cofactor.

It localises to the secreted. The enzyme catalyses Endohydrolysis of (1-&gt;4)-alpha-D-glucosidic linkages in polysaccharides containing three or more (1-&gt;4)-alpha-linked D-glucose units.. The polypeptide is Alpha-amylase-related protein (Amyrel) (Drosophila mauritiana (Fruit fly)).